Consider the following 549-residue polypeptide: T-complex protein 1 subunit theta (549 aa).

This sequence belongs to the TCP-1 chaperonin family. Heterooligomeric complex of about 850 to 900 kDa that forms two stacked rings, 12 to 16 nm in diameter. Interacts with CCT3, KNAT1, STM and TTG1. As to expression, expressed in shoot meristems, root tip, vasculature and leaf epidermis.

Its subcellular location is the cytoplasm. Molecular chaperone; assists the folding of proteins upon ATP hydrolysis. Known to play a role, in vitro, in the folding of actin and tubulin. Contributes to stem cell maintenance through its impact on transcription factors trafficking through plasmodesmata. Probably involved in refolding translocated, partially unfolded proteins, including viral movement proteins. The sequence is that of T-complex protein 1 subunit theta from Arabidopsis thaliana (Mouse-ear cress).